Here is a 106-residue protein sequence, read N- to C-terminus: NADH-quinone oxidoreductase subunit K (106 aa).

The next 3 helical transmembrane spans lie at 9-29, 35-55, and 70-90; these read LGHY…GIFL, IVML…MVAF, and FILT…VIYF.

This sequence belongs to the complex I subunit 4L family. As to quaternary structure, NDH-1 is composed of 14 different subunits. Subunits NuoA, H, J, K, L, M, N constitute the membrane sector of the complex.

The protein localises to the cell inner membrane. The enzyme catalyses a quinone + NADH + 5 H(+)(in) = a quinol + NAD(+) + 4 H(+)(out). NDH-1 shuttles electrons from NADH, via FMN and iron-sulfur (Fe-S) centers, to quinones in the respiratory chain. The immediate electron acceptor for the enzyme in this species is believed to be ubiquinone. Couples the redox reaction to proton translocation (for every two electrons transferred, four hydrogen ions are translocated across the cytoplasmic membrane), and thus conserves the redox energy in a proton gradient. The chain is NADH-quinone oxidoreductase subunit K from Granulibacter bethesdensis (strain ATCC BAA-1260 / CGDNIH1).